We begin with the raw amino-acid sequence, 42 residues long: Delta-actitoxin-Ael2d (42 aa).

3 disulfides stabilise this stretch: Cys-4–Cys-37, Cys-6–Cys-30, and Cys-20–Cys-38.

This sequence belongs to the sea anemone type 3 (BDS) potassium channel toxin family.

It localises to the secreted. The protein resides in the nematocyst. Functionally, binds to voltage-gated sodium channels (Nav), and slows down the inactivation of mammalian Nav1.2/SCN2A, Nav1.3/SCN3A Nav1.4/SCN4A, Nav1.6/SCN8A, insect DmNav1 and BgNav1 channels, and arachnid VdNav1 channel. This toxin acts by binding to site 3 of sodium channels. The chain is Delta-actitoxin-Ael2d from Anthopleura elegantissima (Green aggregating anemone).